The following is a 396-amino-acid chain: NDP-glycosyltransferase YjiC (396 aa).

Residues asparagine 18, threonine 234, valine 283, histidine 298, and 302–306 (NSTME) each bind UDP.

Belongs to the UDP-glycosyltransferase family.

It catalyses the reaction an NDP-glycose + an acceptor = a glycosylated acceptor + NDP.. Its function is as follows. Glycosyltransferase that can glycosylate a wide range of substrates, including various flavonoids (flavones, flavonols, flavanones, flavanols, chalcones), isoflavonoids and stilbenes, to produce multiple glycosylated products. It can accept diverse nucleotide diphosphate-D/L-sugars as donors, including ADP-, GDP-, CDP-, TDP- or UDP-alpha-D-glucose, and catalyzes O-, N-, or S-glycosylation. In vitro, catalyzes the glycosylation of, among others, apigenin, 3-hydroxyflavone, phloretin or resveratrol, resulting in multiple glucosylated products, along with mono-, di-, tri- and tetraglucosides. Can also catalyze the glycosylation of the macrolide epothilone A with diverse NDP-D/L-sugars, forming different epothilone A glycoside derivatives. In Bacillus licheniformis (strain ATCC 14580 / DSM 13 / JCM 2505 / CCUG 7422 / NBRC 12200 / NCIMB 9375 / NCTC 10341 / NRRL NRS-1264 / Gibson 46), this protein is NDP-glycosyltransferase YjiC.